We begin with the raw amino-acid sequence, 208 residues long: Thymidylate kinase (208 aa).

Position 10–17 (10–17 (GLEGAGKS)) interacts with ATP.

This sequence belongs to the thymidylate kinase family.

The catalysed reaction is dTMP + ATP = dTDP + ADP. Phosphorylation of dTMP to form dTDP in both de novo and salvage pathways of dTTP synthesis. This Pseudoalteromonas translucida (strain TAC 125) protein is Thymidylate kinase.